The sequence spans 394 residues: Chaperone protein DnaJ (394 aa).

The J domain occupies 5–75; it reads DYYEVLGVDK…EKKQQYDQFG (71 aa). The segment at 150 to 231 adopts a CR-type zinc-finger fold; sequence GVEKTIKYKR…CRGTGTAKET (82 aa). 8 residues coordinate Zn(2+): Cys163, Cys166, Cys179, Cys182, Cys205, Cys208, Cys219, and Cys222. 4 CXXCXGXG motif repeats span residues 163-170, 179-186, 205-212, and 219-226; these read CEHCHGTG, CPTCNGQG, CPDCHGTG, and CKHCRGTG.

The protein belongs to the DnaJ family. Homodimer. Zn(2+) serves as cofactor.

It localises to the cytoplasm. Functionally, participates actively in the response to hyperosmotic and heat shock by preventing the aggregation of stress-denatured proteins and by disaggregating proteins, also in an autonomous, DnaK-independent fashion. Unfolded proteins bind initially to DnaJ; upon interaction with the DnaJ-bound protein, DnaK hydrolyzes its bound ATP, resulting in the formation of a stable complex. GrpE releases ADP from DnaK; ATP binding to DnaK triggers the release of the substrate protein, thus completing the reaction cycle. Several rounds of ATP-dependent interactions between DnaJ, DnaK and GrpE are required for fully efficient folding. Also involved, together with DnaK and GrpE, in the DNA replication of plasmids through activation of initiation proteins. In Fusobacterium nucleatum subsp. polymorphum (Fusobacterium polymorphum), this protein is Chaperone protein DnaJ.